The following is a 300-amino-acid chain: GTPase Era (300 aa).

In terms of domain architecture, Era-type G spans 7–182 (YCGFIAIVGR…LRKGVHHFPE (176 aa)). The tract at residues 15–22 (GRPNVGKS) is G1. A GTP-binding site is contributed by 15-22 (GRPNVGKS). The tract at residues 41–45 (QTTRH) is G2. Positions 62–65 (DTPG) are G3. GTP-binding positions include 62–66 (DTPGL) and 124–127 (NKVD). Residues 124 to 127 (NKVD) form a G4 region. Positions 154-156 (ISA) are G5. The KH type-2 domain maps to 206-283 (TGEELPYSVT…HLELWVKVKS (78 aa)).

It belongs to the TRAFAC class TrmE-Era-EngA-EngB-Septin-like GTPase superfamily. Era GTPase family. In terms of assembly, monomer.

It is found in the cytoplasm. The protein localises to the cell inner membrane. In terms of biological role, an essential GTPase that binds both GDP and GTP, with rapid nucleotide exchange. Plays a role in 16S rRNA processing and 30S ribosomal subunit biogenesis and possibly also in cell cycle regulation and energy metabolism. In Histophilus somni (strain 129Pt) (Haemophilus somnus), this protein is GTPase Era.